Here is a 143-residue protein sequence, read N- to C-terminus: Transcription antitermination protein NusB (143 aa).

The protein belongs to the NusB family.

In terms of biological role, involved in transcription antitermination. Required for transcription of ribosomal RNA (rRNA) genes. Binds specifically to the boxA antiterminator sequence of the ribosomal RNA (rrn) operons. The protein is Transcription antitermination protein NusB of Mannheimia succiniciproducens (strain KCTC 0769BP / MBEL55E).